The following is a 763-amino-acid chain: Phosphoglycerol transferase I (763 aa).

A run of 4 helical transmembrane segments spans residues 1-21 (MSEL…AWKA), 26-46 (WWFA…ITLY), 77-97 (ILPG…LGWV), and 108-128 (VGYS…SPAF).

Belongs to the OpgB family.

The protein resides in the cell inner membrane. The catalysed reaction is a phosphatidylglycerol + a membrane-derived-oligosaccharide D-glucose = a 1,2-diacyl-sn-glycerol + a membrane-derived-oligosaccharide 6-(glycerophospho)-D-glucose.. The protein operates within glycan metabolism; osmoregulated periplasmic glucan (OPG) biosynthesis. Functionally, transfers a phosphoglycerol residue from phosphatidylglycerol to the membrane-bound nascent glucan backbones. The chain is Phosphoglycerol transferase I from Salmonella heidelberg (strain SL476).